The primary structure comprises 240 residues: NAD(P)H-quinone oxidoreductase subunit K (240 aa).

Residues C55, C56, C120, and C151 each contribute to the [4Fe-4S] cluster site.

It belongs to the complex I 20 kDa subunit family. In terms of assembly, NDH-1 can be composed of about 15 different subunits; different subcomplexes with different compositions have been identified which probably have different functions. It depends on [4Fe-4S] cluster as a cofactor.

The protein localises to the cellular thylakoid membrane. The catalysed reaction is a plastoquinone + NADH + (n+1) H(+)(in) = a plastoquinol + NAD(+) + n H(+)(out). The enzyme catalyses a plastoquinone + NADPH + (n+1) H(+)(in) = a plastoquinol + NADP(+) + n H(+)(out). Functionally, NDH-1 shuttles electrons from an unknown electron donor, via FMN and iron-sulfur (Fe-S) centers, to quinones in the respiratory and/or the photosynthetic chain. The immediate electron acceptor for the enzyme in this species is believed to be plastoquinone. Couples the redox reaction to proton translocation, and thus conserves the redox energy in a proton gradient. Cyanobacterial NDH-1 also plays a role in inorganic carbon-concentration. In Trichodesmium erythraeum (strain IMS101), this protein is NAD(P)H-quinone oxidoreductase subunit K.